Consider the following 256-residue polypeptide: Non-homologous end joining protein Ku 2 (256 aa).

A Ku domain is found at 13–184 (FADTDVAVKL…SLELQESPVS (172 aa)).

It belongs to the prokaryotic Ku family. In terms of assembly, homodimer. Interacts with LigD.

Its function is as follows. With LigD forms a non-homologous end joining (NHEJ) DNA repair enzyme, which repairs dsDNA breaks with reduced fidelity. Binds linear dsDNA with 5'- and 3'- overhangs but not closed circular dsDNA nor ssDNA. Recruits and stimulates the ligase activity of LigD. The sequence is that of Non-homologous end joining protein Ku 2 from Geotalea uraniireducens (strain Rf4) (Geobacter uraniireducens).